A 355-amino-acid polypeptide reads, in one-letter code: Serine acetyltransferase 4 (355 aa).

Belongs to the transferase hexapeptide repeat family. As to quaternary structure, homomultimer. In terms of tissue distribution, localized in vascular tissues, particularly in phloem.

It is found in the cytoplasm. It carries out the reaction L-serine + acetyl-CoA = O-acetyl-L-serine + CoA. Its pathway is amino-acid biosynthesis; L-cysteine biosynthesis; L-cysteine from L-serine: step 1/2. Its activity is regulated as follows. Feedback inhibitions by L-Ser and acetyl-CoA. This is Serine acetyltransferase 4 from Arabidopsis thaliana (Mouse-ear cress).